We begin with the raw amino-acid sequence, 248 residues long: uncharacterized protein (248 aa).

A coiled-coil region spans residues 33-57 (EWQLSEGQKRCEEINRQNRQLRVEK).

This is an uncharacterized protein from Escherichia coli (strain K12).